The sequence spans 347 residues: 4-hydroxy-2-oxovalerate aldolase (347 aa).

Residues 2-252 (ILISDATLRD…DTRTTFERVM (251 aa)) form the Pyruvate carboxyltransferase domain. 10–11 (RD) is a binding site for substrate. Aspartate 11 lines the Mn(2+) pocket. Residue histidine 14 is the Proton acceptor of the active site. 2 residues coordinate substrate: serine 164 and histidine 191. Residues histidine 191 and histidine 193 each contribute to the Mn(2+) site.

This sequence belongs to the 4-hydroxy-2-oxovalerate aldolase family.

The catalysed reaction is (S)-4-hydroxy-2-oxopentanoate = acetaldehyde + pyruvate. This is 4-hydroxy-2-oxovalerate aldolase from Burkholderia pseudomallei (strain 1106a).